Consider the following 156-residue polypeptide: Small ribosomal subunit protein uS7 (156 aa).

It belongs to the universal ribosomal protein uS7 family. In terms of assembly, part of the 30S ribosomal subunit. Contacts proteins S9 and S11.

In terms of biological role, one of the primary rRNA binding proteins, it binds directly to 16S rRNA where it nucleates assembly of the head domain of the 30S subunit. Is located at the subunit interface close to the decoding center, probably blocks exit of the E-site tRNA. The protein is Small ribosomal subunit protein uS7 of Onion yellows phytoplasma (strain OY-M).